The sequence spans 91 residues: Probable Fe(2+)-trafficking protein (91 aa).

The protein belongs to the Fe(2+)-trafficking protein family.

Could be a mediator in iron transactions between iron acquisition and iron-requiring processes, such as synthesis and/or repair of Fe-S clusters in biosynthetic enzymes. This is Probable Fe(2+)-trafficking protein from Tolumonas auensis (strain DSM 9187 / NBRC 110442 / TA 4).